Reading from the N-terminus, the 181-residue chain is Shikimate kinase (181 aa).

17 to 22 (GAGKTT) contacts ATP. A Mg(2+)-binding site is contributed by T21. Substrate is bound by residues D39, R63, and G85. R122 contributes to the ATP binding site. Position 141 (R141) interacts with substrate.

Belongs to the shikimate kinase family. As to quaternary structure, monomer. Mg(2+) serves as cofactor.

Its subcellular location is the cytoplasm. The catalysed reaction is shikimate + ATP = 3-phosphoshikimate + ADP + H(+). The protein operates within metabolic intermediate biosynthesis; chorismate biosynthesis; chorismate from D-erythrose 4-phosphate and phosphoenolpyruvate: step 5/7. Its function is as follows. Catalyzes the specific phosphorylation of the 3-hydroxyl group of shikimic acid using ATP as a cosubstrate. In Nostoc sp. (strain PCC 7120 / SAG 25.82 / UTEX 2576), this protein is Shikimate kinase.